The following is a 369-amino-acid chain: MASLQEANGSTAWPPPTASNISEPHQCLLLLYEDIGSSRVRYWDLLLLIPNVLFFIFLLWKLPLARAKIRVTSSPIFITFYILVFVVALVGIARAVVSMTVSASDAATVADKILWEITRFFLLAIELSVIILGLAFGHLESKSSIKRVLAITTVLSLAYSVTQGTLEILYPDSHLSAEDFNIYGHGGRQFWLVSSCFFFLVYSLVVILPKTPLKERVSLPSRRSFYVYAGILATLNLLQGLGSALLCANIIVGLCCVDATTFLYFSFFAPLIYVAFLRGFFGSEPKILFSYKCQVDEAEEPDMHLPQPYAVARREGIESAGPACASAANYSSTQFDSAGVAYLDDIASMPCHTGSINSTDSERWKAINA.

The N-linked (GlcNAc...) asparagine glycan is linked to Asn-20. A run of 7 helical transmembrane segments spans residues 45–65 (LLLL…LPLA), 73–93 (SSPI…VGIA), 120–140 (FFLL…GHLE), 148–168 (VLAI…TLEI), 189–209 (QFWL…VILP), 237–257 (LLQG…LCCV), and 262–282 (FLYF…GFFG). N-linked (GlcNAc...) asparagine glycosylation is present at Asn-329.

This sequence belongs to the UPF0359 family. As to expression, ubiquitous, with higher levels in heart, brain, lung, liver and kidney.

It is found in the membrane. The chain is Transmembrane protein adipocyte-associated 1 (Tpra1) from Mus musculus (Mouse).